Consider the following 66-residue polypeptide: Trypsin inhibitor (66 aa).

Intrachain disulfides connect C5/C28, C16/C44, C19/C58, C21/C38, and C43/C64.

It localises to the secreted. This is Trypsin inhibitor from Ascaris suum (Pig roundworm).